Here is a 393-residue protein sequence, read N- to C-terminus: Protein TsgA (393 aa).

The next 12 membrane-spanning stretches (helical) occupy residues 11–31, 51–71, 78–98, 101–121, 134–154, 162–182, 206–226, 245–265, 273–293, 298–318, 332–352, and 361–381; these read WISF…GMVM, FLNA…EIIP, FGFI…SLAL, AAMF…TFLI, LLFT…VAAF, WYWV…LTFG, IGVL…LGFI, ALVS…SFIL, ILTV…TGTQ, WFIL…ITLG, FILT…GPIV, and LLTA…LGFV.

This sequence belongs to the major facilitator superfamily. TsgA family.

It localises to the cell inner membrane. The polypeptide is Protein TsgA (Salmonella agona (strain SL483)).